The following is a 636-amino-acid chain: Chaperone protein DnaK (636 aa).

Residue T198 is modified to Phosphothreonine; by autocatalysis. The span at 602–613 (QPAGEEQAGAAA) shows a compositional bias: low complexity. Residues 602-636 (QPAGEEQAGAAAHEGEAKGEKVVDADFEEVKEDKK) are disordered. Over residues 614–625 (HEGEAKGEKVVD) the composition is skewed to basic and acidic residues. Residues 626–636 (ADFEEVKEDKK) show a composition bias toward acidic residues.

Belongs to the heat shock protein 70 family.

Acts as a chaperone. In Geotalea daltonii (strain DSM 22248 / JCM 15807 / FRC-32) (Geobacter daltonii), this protein is Chaperone protein DnaK.